The primary structure comprises 169 residues: Large ribosomal subunit protein uL5 (169 aa).

It belongs to the universal ribosomal protein uL5 family. Part of the 50S ribosomal subunit; contacts the 5S rRNA and probably tRNA. Forms a bridge to the 30S subunit in the 70S ribosome.

In terms of biological role, this is one of the proteins that bind and probably mediate the attachment of the 5S RNA into the large ribosomal subunit, where it forms part of the central protuberance. In the 70S ribosome it contacts protein S13 of the 30S subunit (bridge B1b), connecting the 2 subunits; this bridge is implicated in subunit movement. May contact the P site tRNA; the 5S rRNA and some of its associated proteins might help stabilize positioning of ribosome-bound tRNAs. The chain is Large ribosomal subunit protein uL5 from Cenarchaeum symbiosum (strain A).